The primary structure comprises 353 residues: Photosystem II D2 protein (353 aa).

At threonine 2 the chain carries N-acetylthreonine. At threonine 2 the chain carries Phosphothreonine. Residues 41–61 traverse the membrane as a helical segment; that stretch reads CAYFAVGGWFTGTTFVTSWYT. Histidine 118 serves as a coordination point for chlorophyll a. Residues 125–141 traverse the membrane as a helical segment; that stretch reads GFMLRQFELARSVQLRP. Pheophytin a contacts are provided by glutamine 130 and asparagine 143. The chain crosses the membrane as a helical span at residues 153 to 166; that stretch reads VFVSVFLIYPLGQS. Histidine 198 is a chlorophyll a binding site. The helical transmembrane segment at 208-228 threads the bilayer; that stretch reads AALLCAIHGATVENTLFEDGD. A plastoquinone contacts are provided by histidine 215 and phenylalanine 262. Histidine 215 provides a ligand contact to Fe cation. Histidine 269 contacts Fe cation. The chain crosses the membrane as a helical span at residues 279-295; it reads GLWMSALGVVGLALNLR.

The protein belongs to the reaction center PufL/M/PsbA/D family. In terms of assembly, PSII is composed of 1 copy each of membrane proteins PsbA, PsbB, PsbC, PsbD, PsbE, PsbF, PsbH, PsbI, PsbJ, PsbK, PsbL, PsbM, PsbT, PsbX, PsbY, PsbZ, Psb30/Ycf12, at least 3 peripheral proteins of the oxygen-evolving complex and a large number of cofactors. It forms dimeric complexes. The D1/D2 heterodimer binds P680, chlorophylls that are the primary electron donor of PSII, and subsequent electron acceptors. It shares a non-heme iron and each subunit binds pheophytin, quinone, additional chlorophylls, carotenoids and lipids. There is also a Cl(-1) ion associated with D1 and D2, which is required for oxygen evolution. The PSII complex binds additional chlorophylls, carotenoids and specific lipids. serves as cofactor.

Its subcellular location is the plastid. The protein localises to the chloroplast thylakoid membrane. It catalyses the reaction 2 a plastoquinone + 4 hnu + 2 H2O = 2 a plastoquinol + O2. In terms of biological role, photosystem II (PSII) is a light-driven water:plastoquinone oxidoreductase that uses light energy to abstract electrons from H(2)O, generating O(2) and a proton gradient subsequently used for ATP formation. It consists of a core antenna complex that captures photons, and an electron transfer chain that converts photonic excitation into a charge separation. The D1/D2 (PsbA/PsbD) reaction center heterodimer binds P680, the primary electron donor of PSII as well as several subsequent electron acceptors. D2 is needed for assembly of a stable PSII complex. The chain is Photosystem II D2 protein from Cicer arietinum (Chickpea).